The sequence spans 298 residues: Ethanolamine ammonia-lyase small subunit (298 aa).

Residues 17–37 form a disordered region; the sequence is MGQDVPQPVAPSKQEGAKPQC. Valine 210, glutamate 231, and cysteine 261 together coordinate adenosylcob(III)alamin.

Belongs to the EutC family. In terms of assembly, the basic unit is a heterodimer which dimerizes to form tetramers. The heterotetramers trimerize; 6 large subunits form a core ring with 6 small subunits projecting outwards. It depends on adenosylcob(III)alamin as a cofactor.

The protein resides in the bacterial microcompartment. The catalysed reaction is ethanolamine = acetaldehyde + NH4(+). It functions in the pathway amine and polyamine degradation; ethanolamine degradation. Functionally, catalyzes the deamination of various vicinal amino-alcohols to oxo compounds. Allows this organism to utilize ethanolamine as the sole source of nitrogen and carbon in the presence of external vitamin B12. This Salmonella paratyphi A (strain ATCC 9150 / SARB42) protein is Ethanolamine ammonia-lyase small subunit.